The following is a 148-amino-acid chain: UPF0540 protein At1g62000 (148 aa).

A signal peptide spans 1 to 21 (MNATKFVVLLVIGILCAIVTA). A compositionally biased stretch (low complexity) spans 123-132 (RANGKVASAS). The interval 123–148 (RANGKVASASRVKGSSEKKKGKGKKD) is disordered.

Belongs to the UPF0540 family.

The protein is UPF0540 protein At1g62000 of Arabidopsis thaliana (Mouse-ear cress).